The chain runs to 139 residues: MAMTYHLDVVSAEQQMFSGLVEKIQVTGSEGELGIYPGHAPLLTAIKPGMIRIVKQHGHEEFIYLSGGILEVQSGNVTVLADTAIRGQDLDEARAMEAKRKAEEHISSSHGDVDYAQASAELAKAIAQLRVIELTKKAM.

It belongs to the ATPase epsilon chain family. F-type ATPases have 2 components, CF(1) - the catalytic core - and CF(0) - the membrane proton channel. CF(1) has five subunits: alpha(3), beta(3), gamma(1), delta(1), epsilon(1). CF(0) has three main subunits: a, b and c.

It is found in the cell inner membrane. Produces ATP from ADP in the presence of a proton gradient across the membrane. The polypeptide is ATP synthase epsilon chain (Shigella boydii serotype 18 (strain CDC 3083-94 / BS512)).